A 338-amino-acid chain; its full sequence is Malate dehydrogenase, mitochondrial (338 aa).

A mitochondrion-targeting transit peptide spans 1–24 (MLSALARPAGAALRRSFSTSAQNN). NAD(+)-binding positions include 31-37 (GASGGIG) and D57. S33 carries O-linked (GlcNAc) serine glycosylation. K78 and K91 each carry N6-acetyllysine; alternate. Residues K78 and K91 each carry the N6-succinyllysine; alternate modification. Substrate contacts are provided by R104 and R110. Residues N117 and 140–142 (ISN) contribute to the NAD(+) site. N142 contributes to the substrate binding site. Residue K165 is modified to N6-acetyllysine. Residue R176 coordinates substrate. K185 carries the post-translational modification N6-acetyllysine; alternate. K185 is modified (N6-succinyllysine; alternate). The Proton acceptor role is filled by H200. At K203 the chain carries N6-succinyllysine. N6-acetyllysine; alternate occurs at positions 215 and 239. Residues K215 and K239 each carry the N6-succinyllysine; alternate modification. K239 is subject to N6-malonyllysine; alternate. S246 is modified (phosphoserine). NAD(+) is bound at residue M251. N6-succinyllysine is present on K269. N6-acetyllysine; alternate is present on residues K296, K301, K307, K314, and K324. Residues K296, K301, K307, K314, and K324 each carry the N6-succinyllysine; alternate modification. Position 307 is an N6-malonyllysine; alternate (K307). S326 bears the Phosphoserine mark. N6-acetyllysine; alternate occurs at positions 328, 329, and 335. Residue K328 is modified to N6-succinyllysine; alternate. K329 is modified (N6-malonyllysine; alternate). K335 carries the N6-succinyllysine; alternate modification.

This sequence belongs to the LDH/MDH superfamily. MDH type 1 family. As to quaternary structure, homodimer. Acetylation is enhanced after treatment either with trichostin A (TCA) or with nicotinamide (NAM) with the appearance of tri- and tetraacetylations. Glucose also increases acetylation.

Its subcellular location is the mitochondrion matrix. The enzyme catalyses (S)-malate + NAD(+) = oxaloacetate + NADH + H(+). Enzyme activity is enhanced by acetylation. The protein is Malate dehydrogenase, mitochondrial (MDH2) of Bos taurus (Bovine).